Here is a 240-residue protein sequence, read N- to C-terminus: MKIKKKNKIYQGKSKIIYSTNNSDVLILKFKKDMSRLNGKYIKKFDNKDIINNKFNYYIMNKISSFNIKTHILSLLSDNQVIVKKLKMIPIEFVVRNYAYGSLLKRFLIKERSFINPPILEFFFKNDGLKDPMINEYHCISFNLISENHIKKIKKILYKINNILKDIFYKAELILVDFKLEFGLFNGDLFLGDEFSLDNSRVWDKNSFKKMDKDIFREQLNENVIESYKEVANRIGCLID.

The protein belongs to the SAICAR synthetase family.

It catalyses the reaction 5-amino-1-(5-phospho-D-ribosyl)imidazole-4-carboxylate + L-aspartate + ATP = (2S)-2-[5-amino-1-(5-phospho-beta-D-ribosyl)imidazole-4-carboxamido]succinate + ADP + phosphate + 2 H(+). The protein operates within purine metabolism; IMP biosynthesis via de novo pathway; 5-amino-1-(5-phospho-D-ribosyl)imidazole-4-carboxamide from 5-amino-1-(5-phospho-D-ribosyl)imidazole-4-carboxylate: step 1/2. In Wigglesworthia glossinidia brevipalpis, this protein is Phosphoribosylaminoimidazole-succinocarboxamide synthase.